The primary structure comprises 526 residues: Protein mono-ADP-ribosyltransferase PARP3 (526 aa).

Residues 1-55 (MAPKRRAPPASQPADGGKKAKGGQEEEEDAWSSALNALKTAPREKPPATIDGQCP) are disordered. The WGR domain occupies 61–151 (DAKVYEDYDC…DNFVAQPGKY (91 aa)). The region spanning 183–301 (PCALDETTQK…DIEVAQSLQA (119 aa)) is the PARP alpha-helical domain. One can recognise a PARP catalytic domain in the interval 312-526 (HPLDRDYALL…RIRYLVQLHF (215 aa)).

This sequence belongs to the ARTD/PARP family.

Its subcellular location is the nucleus. It is found in the chromosome. It localises to the cytoplasm. The protein resides in the cytoskeleton. The protein localises to the microtubule organizing center. Its subcellular location is the centrosome. It is found in the centriole. The enzyme catalyses L-aspartyl-[protein] + NAD(+) = 4-O-(ADP-D-ribosyl)-L-aspartyl-[protein] + nicotinamide. The catalysed reaction is L-glutamyl-[protein] + NAD(+) = 5-O-(ADP-D-ribosyl)-L-glutamyl-[protein] + nicotinamide. It catalyses the reaction L-lysyl-[protein] + NAD(+) = N(6)-(ADP-D-ribosyl)-L-lysyl-[protein] + nicotinamide + H(+). Its function is as follows. Mono-ADP-ribosyltransferase that mediates mono-ADP-ribosylation of target proteins and plays a key role in the response to DNA damage. Mediates mono-ADP-ribosylation of glutamate, aspartate or lysine residues on target proteins. In contrast to PARP1 and PARP2, it is not able to mediate poly-ADP-ribosylation. Involved in DNA repair by mediating mono-ADP-ribosylation of a limited number of acceptor proteins involved in chromatin architecture and in DNA metabolism, such as histone H2B, XRCC5 and XRCC6. ADP-ribosylation follows DNA damage and appears as an obligatory step in a detection/signaling pathway leading to the reparation of DNA strand breaks. Involved in single-strand break repair by catalyzing mono-ADP-ribosylation of histone H2B on 'Glu-2' (H2BE2ADPr) of nucleosomes containing nicked DNA. Cooperates with the XRCC5-XRCC6 (Ku80-Ku70) heterodimer to limit end-resection thereby promoting accurate NHEJ. Associates with a number of DNA repair factors and is involved in the response to exogenous and endogenous DNA strand breaks. Together with APLF, promotes the retention of the LIG4-XRCC4 complex on chromatin and accelerate DNA ligation during non-homologous end-joining (NHEJ). In addition to proteins, also able to ADP-ribosylate DNA: mediates DNA mono-ADP-ribosylation of DNA strand break termini via covalent addition of a single ADP-ribose moiety to a 5'- or 3'-terminal phosphate residues in DNA containing multiple strand breaks. In Gallus gallus (Chicken), this protein is Protein mono-ADP-ribosyltransferase PARP3.